A 163-amino-acid polypeptide reads, in one-letter code: Large ribosomal subunit protein eL24y (163 aa).

The segment covering 119-133 has biased composition (basic and acidic residues); that stretch reads IKKTKDEKKAKKVEF. The segment at 119–163 is disordered; sequence IKKTKDEKKAKKVEFASKQQKVKANFPKAAAASKGPKVGGGGGKR.

The protein belongs to the eukaryotic ribosomal protein eL24 family. Interacts with REIL1 and REIL2. Component of the large ribosomal subunit. As to expression, ubiquitous.

The protein resides in the cytoplasm. The protein localises to the nucleus. It is found in the nucleolus. Its subcellular location is the nucleoplasm. Its function is as follows. Might have an extraribosomal function in reinitiation of translation of ETTIN and MONOPTEROS genes that are involved in the auxin-mediated gynoecium patterning. Essential in leaf polarity establishment, probably having a role for translation in leaf dorsoventral patterning to specify leaf adaxial identity. This is Large ribosomal subunit protein eL24y from Arabidopsis thaliana (Mouse-ear cress).